A 550-amino-acid polypeptide reads, in one-letter code: CTP synthase (550 aa).

Residues 1–270 (MTKFVFVTGG…DRLICEELRL (270 aa)) are amidoligase domain. Ser-13 lines the CTP pocket. Ser-13 contributes to the UTP binding site. ATP-binding positions include 14-19 (SLGKGI) and Asp-71. Mg(2+)-binding residues include Asp-71 and Glu-144. Residues 151–153 (DIE), 191–196 (KTKPTQ), and Lys-227 contribute to the CTP site. UTP-binding positions include 191–196 (KTKPTQ) and Lys-227. Residues 295–547 (TIGMVGKYVD…VEAALASQQR (253 aa)) enclose the Glutamine amidotransferase type-1 domain. Gly-356 contacts L-glutamine. The active-site Nucleophile; for glutamine hydrolysis is the Cys-383. L-glutamine-binding positions include 384–387 (LGMQ), Glu-407, and Arg-473. Residues His-520 and Glu-522 contribute to the active site.

It belongs to the CTP synthase family. In terms of assembly, homotetramer.

The catalysed reaction is UTP + L-glutamine + ATP + H2O = CTP + L-glutamate + ADP + phosphate + 2 H(+). It carries out the reaction L-glutamine + H2O = L-glutamate + NH4(+). The enzyme catalyses UTP + NH4(+) + ATP = CTP + ADP + phosphate + 2 H(+). The protein operates within pyrimidine metabolism; CTP biosynthesis via de novo pathway; CTP from UDP: step 2/2. With respect to regulation, allosterically activated by GTP, when glutamine is the substrate; GTP has no effect on the reaction when ammonia is the substrate. The allosteric effector GTP functions by stabilizing the protein conformation that binds the tetrahedral intermediate(s) formed during glutamine hydrolysis. Inhibited by the product CTP, via allosteric rather than competitive inhibition. In terms of biological role, catalyzes the ATP-dependent amination of UTP to CTP with either L-glutamine or ammonia as the source of nitrogen. Regulates intracellular CTP levels through interactions with the four ribonucleotide triphosphates. This chain is CTP synthase, found in Cupriavidus taiwanensis (strain DSM 17343 / BCRC 17206 / CCUG 44338 / CIP 107171 / LMG 19424 / R1) (Ralstonia taiwanensis (strain LMG 19424)).